The following is a 233-amino-acid chain: 7-cyano-7-deazaguanine synthase (233 aa).

Residue 8–18 coordinates ATP; that stretch reads LSGGLDSTTCM. Positions 186, 194, 197, and 200 each coordinate Zn(2+).

The protein belongs to the QueC family. In terms of assembly, homodimer. Zn(2+) is required as a cofactor.

The catalysed reaction is 7-carboxy-7-deazaguanine + NH4(+) + ATP = 7-cyano-7-deazaguanine + ADP + phosphate + H2O + H(+). It participates in purine metabolism; 7-cyano-7-deazaguanine biosynthesis. Functionally, catalyzes the ATP-dependent conversion of 7-carboxy-7-deazaguanine (CDG) to 7-cyano-7-deazaguanine (preQ(0)). The chain is 7-cyano-7-deazaguanine synthase from Desulfitobacterium hafniense (strain DSM 10664 / DCB-2).